The chain runs to 456 residues: Bifunctional protein GlmU (456 aa).

Residues 1 to 229 are pyrophosphorylase; it reads MLNNAMSVVI…LSEVEGVNNR (229 aa). UDP-N-acetyl-alpha-D-glucosamine-binding positions include 11-14, Lys25, Gln76, 81-82, 103-105, Gly140, Glu154, Asn169, and Asn227; these read LAAG, GT, and YGD. Residue Asp105 coordinates Mg(2+). Residue Asn227 coordinates Mg(2+). Residues 230–250 form a linker region; the sequence is LQLSRLERVYQSEQAEKLLLA. The N-acetyltransferase stretch occupies residues 251-456; the sequence is GVMLRDPARF…EGWRRPVKKK (206 aa). Residues Arg333 and Lys351 each contribute to the UDP-N-acetyl-alpha-D-glucosamine site. His363 (proton acceptor) is an active-site residue. Tyr366 and Asn377 together coordinate UDP-N-acetyl-alpha-D-glucosamine. Residues Ala380, 386–387, Ser405, Ala423, and Arg440 contribute to the acetyl-CoA site; that span reads NY.

The protein in the N-terminal section; belongs to the N-acetylglucosamine-1-phosphate uridyltransferase family. It in the C-terminal section; belongs to the transferase hexapeptide repeat family. Homotrimer. It depends on Mg(2+) as a cofactor.

It is found in the cytoplasm. It catalyses the reaction alpha-D-glucosamine 1-phosphate + acetyl-CoA = N-acetyl-alpha-D-glucosamine 1-phosphate + CoA + H(+). The catalysed reaction is N-acetyl-alpha-D-glucosamine 1-phosphate + UTP + H(+) = UDP-N-acetyl-alpha-D-glucosamine + diphosphate. The protein operates within nucleotide-sugar biosynthesis; UDP-N-acetyl-alpha-D-glucosamine biosynthesis; N-acetyl-alpha-D-glucosamine 1-phosphate from alpha-D-glucosamine 6-phosphate (route II): step 2/2. Its pathway is nucleotide-sugar biosynthesis; UDP-N-acetyl-alpha-D-glucosamine biosynthesis; UDP-N-acetyl-alpha-D-glucosamine from N-acetyl-alpha-D-glucosamine 1-phosphate: step 1/1. It participates in bacterial outer membrane biogenesis; LPS lipid A biosynthesis. Catalyzes the last two sequential reactions in the de novo biosynthetic pathway for UDP-N-acetylglucosamine (UDP-GlcNAc). The C-terminal domain catalyzes the transfer of acetyl group from acetyl coenzyme A to glucosamine-1-phosphate (GlcN-1-P) to produce N-acetylglucosamine-1-phosphate (GlcNAc-1-P), which is converted into UDP-GlcNAc by the transfer of uridine 5-monophosphate (from uridine 5-triphosphate), a reaction catalyzed by the N-terminal domain. The sequence is that of Bifunctional protein GlmU from Escherichia coli O81 (strain ED1a).